Reading from the N-terminus, the 485-residue chain is Glutamyl-tRNA(Gln) amidotransferase subunit A (485 aa).

Catalysis depends on charge relay system residues lysine 79 and serine 154. Serine 178 functions as the Acyl-ester intermediate in the catalytic mechanism.

It belongs to the amidase family. GatA subfamily. As to quaternary structure, heterotrimer of A, B and C subunits.

It carries out the reaction L-glutamyl-tRNA(Gln) + L-glutamine + ATP + H2O = L-glutaminyl-tRNA(Gln) + L-glutamate + ADP + phosphate + H(+). Functionally, allows the formation of correctly charged Gln-tRNA(Gln) through the transamidation of misacylated Glu-tRNA(Gln) in organisms which lack glutaminyl-tRNA synthetase. The reaction takes place in the presence of glutamine and ATP through an activated gamma-phospho-Glu-tRNA(Gln). In Bacillus velezensis (strain DSM 23117 / BGSC 10A6 / LMG 26770 / FZB42) (Bacillus amyloliquefaciens subsp. plantarum), this protein is Glutamyl-tRNA(Gln) amidotransferase subunit A.